Reading from the N-terminus, the 302-residue chain is MIFMGSTETVLSVLVLVLLGYILKVLGVLGEEDASTLNRVVINVAIPSLIFTSLYRADLSGISDLVLIPVICMITGTLSGTIAYLWARRRGLDSGKTWGLTVAAAMMNSGFLGYPVTAGIFGSEGLVRAIFYDTGTTLMFTSLGLLLSHISGGEGSRIMKRAVFFPPLWAFLLGVIFNLWGLPTGIAGTILGYLSGAAVPLIMISLGLTLNFRFLRHSVADATLVSGLRLLISPLMAAGISYVLAFRGLNFSVTVLEASMPSAMLAAVLAIENDLDVDLVSSCIFMSTILSLVSLPLWSVVL.

Transmembrane regions (helical) follow at residues 10 to 30 (VLSVLVLVLLGYILKVLGVLG), 65 to 85 (LVLIPVICMITGTLSGTIAYL), 102 to 122 (VAAAMMNSGFLGYPVTAGIFG), 130 to 150 (IFYDTGTTLMFTSLGLLLSHI), 162 to 182 (AVFFPPLWAFLLGVIFNLWGL), 190 to 210 (ILGYLSGAAVPLIMISLGLTL), 224 to 244 (LVSGLRLLISPLMAAGISYVL), 251 to 271 (FSVTVLEASMPSAMLAAVLAI), and 282 to 302 (SCIFMSTILSLVSLPLWSVVL).

Belongs to the auxin efflux carrier (TC 2.A.69) family.

It is found in the cell membrane. This is an uncharacterized protein from Methanothermobacter thermautotrophicus (strain ATCC 29096 / DSM 1053 / JCM 10044 / NBRC 100330 / Delta H) (Methanobacterium thermoautotrophicum).